Here is a 276-residue protein sequence, read N- to C-terminus: Pirin-like protein CC_0481 (276 aa).

Belongs to the pirin family.

The polypeptide is Pirin-like protein CC_0481 (Caulobacter vibrioides (strain ATCC 19089 / CIP 103742 / CB 15) (Caulobacter crescentus)).